The chain runs to 249 residues: Type III pantothenate kinase (249 aa).

Residue 8–15 (DAGNSRLK) participates in ATP binding. Residues Y95 and 102–105 (GVDR) contribute to the substrate site. The Proton acceptor role is filled by D104. D125 lines the K(+) pocket. T128 is an ATP binding site. T179 serves as a coordination point for substrate.

The protein belongs to the type III pantothenate kinase family. As to quaternary structure, homodimer. NH4(+) is required as a cofactor. Requires K(+) as cofactor.

The protein localises to the cytoplasm. The catalysed reaction is (R)-pantothenate + ATP = (R)-4'-phosphopantothenate + ADP + H(+). It functions in the pathway cofactor biosynthesis; coenzyme A biosynthesis; CoA from (R)-pantothenate: step 1/5. Functionally, catalyzes the phosphorylation of pantothenate (Pan), the first step in CoA biosynthesis. The sequence is that of Type III pantothenate kinase from Alkalilimnicola ehrlichii (strain ATCC BAA-1101 / DSM 17681 / MLHE-1).